The primary structure comprises 79 residues: Suppressor of tumorigenicity 20 protein (79 aa).

As to expression, expressed in leukocytes, lung, spleen, liver, heart, kidney, muscle and uterine cervix. Down-regulated in cervical cancer.

May act as a tumor suppressor. Promotes apoptosis of cancer cells. This is Suppressor of tumorigenicity 20 protein (ST20) from Homo sapiens (Human).